Reading from the N-terminus, the 320-residue chain is MVVSELAARLNCAEYKNWVKAGHCLLLLRSCLQGFIDREVLSFHRGLLAAVPGLGPHATCRGGSRCSPRARQFQPQCQVCAEWKHEILRHHINRNGDVHWGNCKPGLWPKDPWEVAKAFMPRGLADKRGPEECDAVALLSLINSCDHFVVDRKKVTEVIKCRNEIMHSSEMKVSSTWLRDFQIKIQNFLNEFKNIPEIVAVYSRIEQLLTSDWAVHIPEEDERDGCEFEIGSYLSVSQIHEIEIELLKEKLQEMYLQAAEEEMLPEEISNQLDVVKGFLGSNTDLRNGLTEDLQKLESLHLQHQKQTSKDAGRQTPERKA.

Omega-N-methylarginine is present on arginine 61. The tract at residues 299–320 is disordered; that stretch reads LHLQHQKQTSKDAGRQTPERKA. Basic and acidic residues predominate over residues 307–320; it reads TSKDAGRQTPERKA. Position 315 is a phosphothreonine (threonine 315).

This is an uncharacterized protein from Mus musculus (Mouse).